We begin with the raw amino-acid sequence, 137 residues long: Large-conductance mechanosensitive channel (137 aa).

The next 2 helical transmembrane spans lie at 10-30 and 76-96; these read FAMR…AAFG and GVFI…FMAI.

It belongs to the MscL family. As to quaternary structure, homopentamer.

The protein resides in the cell inner membrane. Functionally, channel that opens in response to stretch forces in the membrane lipid bilayer. May participate in the regulation of osmotic pressure changes within the cell. The chain is Large-conductance mechanosensitive channel from Klebsiella pneumoniae subsp. pneumoniae (strain ATCC 700721 / MGH 78578).